The primary structure comprises 255 residues: Polycomb group RING finger protein 5 (255 aa).

The segment at 18–57 adopts an RING-type zinc-finger fold; the sequence is CYICKGYLIKPTTVTECLHTFCKTCIVQHFEDSNDCPRCG. The segment at 97–132 is disordered; that stretch reads WKKNKPQENGQDDMSKVDKPKVDEEGDENQDDKDYH. Basic and acidic residues predominate over residues 109-119; it reads DMSKVDKPKVD.

As to quaternary structure, component of a PRC1-like complex that contains PCGF5, RNF2 and UBE2D3. Interacts with RNF2; the interaction is direct. Interacts with CBX6, CBX7 and CBX8. Interacts with AUTS2; the interaction is direct. Identified in a complex that contains AUTS2, PCGF5, CSNK2B and RNF2.

The protein localises to the nucleus. It is found in the nucleoplasm. Component of a Polycomb group (PcG) multiprotein PRC1-like complex, a complex class required to maintain the transcriptionally repressive state of many genes, including Hox genes, throughout development. PcG PRC1 complex acts via chromatin remodeling and modification of histones; it mediates monoubiquitination of histone H2A 'Lys-119', rendering chromatin heritably changed in its expressibility. Within the PRC1-like complex, regulates RNF2 ubiquitin ligase activity. Plays a redundant role with PCGF3 as part of a PRC1-like complex that mediates monoubiquitination of histone H2A 'Lys-119' on the X chromosome and is required for normal silencing of one copy of the X chromosome in XX females. The sequence is that of Polycomb group RING finger protein 5 (PCGF5) from Bos taurus (Bovine).